Here is a 341-residue protein sequence, read N- to C-terminus: Glycerol-1-phosphate dehydrogenase [NAD(P)+] (341 aa).

Residues 81 to 85 (GKAID) and 103 to 106 (TTAS) contribute to the NAD(+) site. Position 108 (Asp108) interacts with substrate. Ser112 is a binding site for NAD(+). Asp151 contacts substrate. Zn(2+) is bound by residues Asp151 and His232. His236 is a substrate binding site. Position 253 (His253) interacts with Zn(2+).

This sequence belongs to the glycerol-1-phosphate dehydrogenase family. Requires Zn(2+) as cofactor.

The protein resides in the cytoplasm. It catalyses the reaction sn-glycerol 1-phosphate + NAD(+) = dihydroxyacetone phosphate + NADH + H(+). It carries out the reaction sn-glycerol 1-phosphate + NADP(+) = dihydroxyacetone phosphate + NADPH + H(+). The protein operates within membrane lipid metabolism; glycerophospholipid metabolism. In terms of biological role, catalyzes the NAD(P)H-dependent reduction of dihydroxyacetonephosphate (DHAP or glycerone phosphate) to glycerol 1-phosphate (G1P). The G1P thus generated is used as the glycerophosphate backbone of phospholipids in the cellular membranes of Archaea. In Methanococcus aeolicus (strain ATCC BAA-1280 / DSM 17508 / OCM 812 / Nankai-3), this protein is Glycerol-1-phosphate dehydrogenase [NAD(P)+].